We begin with the raw amino-acid sequence, 520 residues long: Probable kinase 098L (520 aa).

One can recognise a Protein kinase domain in the interval 82–393 (LTSVQSFGSK…NSPLLKKGFV (312 aa)). ATP-binding positions include 88–96 (FGSKSKQGI) and K111. D205 acts as the Proton acceptor in catalysis. A coiled-coil region spans residues 416–442 (QTAQLIETDKEILDNLIDDLELKIVRK).

This sequence belongs to the protein kinase superfamily.

In terms of biological role, probable kinase. The chain is Probable kinase 098L from Aedes vexans (Inland floodwater mosquito).